A 311-amino-acid polypeptide reads, in one-letter code: Phosphoribosylaminoimidazole-succinocarboxamide synthase (311 aa).

This sequence belongs to the SAICAR synthetase family.

It carries out the reaction 5-amino-1-(5-phospho-D-ribosyl)imidazole-4-carboxylate + L-aspartate + ATP = (2S)-2-[5-amino-1-(5-phospho-beta-D-ribosyl)imidazole-4-carboxamido]succinate + ADP + phosphate + 2 H(+). Its pathway is purine metabolism; IMP biosynthesis via de novo pathway; 5-amino-1-(5-phospho-D-ribosyl)imidazole-4-carboxamide from 5-amino-1-(5-phospho-D-ribosyl)imidazole-4-carboxylate: step 1/2. This chain is Phosphoribosylaminoimidazole-succinocarboxamide synthase, found in Azoarcus sp. (strain BH72).